Consider the following 154-residue polypeptide: Cathelicidin-2 (154 aa).

Positions 1 to 17 (MLSCWVLLLALLGGVCA) are cleaved as a signal peptide. The propeptide occupies 18–122 (LPAPLSYPQA…RCRDASSDPV (105 aa)). Intrachain disulfides connect C75–C86 and C97–C114.

Belongs to the cathelicidin family. As to expression, detected in trachea, lung, proventriculus, duodenum, jejunum, ileum, caeca, colon, caecal tonsil, bursa of Fabricius, kidney, ovary, testis, thymus, liver, spleen, bone marrow, skin, uropygial gland, muscle and brain.

The protein localises to the secreted. Functionally, binds bacterial lipopolysaccharide (LPS). Has potent antimicrobial activity against Gram-positive and Gram-negative bacteria (in vitro). Has hemolytic activity (in vitro). May play a role in the innate immune response. This Gallus gallus (Chicken) protein is Cathelicidin-2 (CATHL2).